The following is a 250-amino-acid chain: Small ribosomal subunit protein uS2 (250 aa).

It belongs to the universal ribosomal protein uS2 family.

The polypeptide is Small ribosomal subunit protein uS2 (Paraburkholderia xenovorans (strain LB400)).